Reading from the N-terminus, the 257-residue chain is Enterotoxin type A (257 aa).

The N-terminal stretch at 1–24 is a signal peptide; it reads MKKTAFTLLLFIALTLTTSPLVNG. A disulfide bridge links Cys120 with Cys130. Zn(2+) contacts are provided by His211, His249, and Asp251.

Belongs to the staphylococcal/streptococcal toxin family. As to quaternary structure, monomer. Interacts with MHC class II molecules alpha/HLA-DRB1 and beta/HLA-DRA chains. The interaction with MHC-II molecules occurs at both zinc-dependent and zinc-independent sites. Interacts with T-cell receptor beta variable 7-9/TRBV7-9. Zn(2+) serves as cofactor.

It is found in the secreted. Its function is as follows. Staphylococcal enterotoxin that activates the host immune system by binding as unprocessed molecules to major histocompatibility (MHC) complex class II and T-cell receptor (TCR) molecules. In turn, waves of cellular activation, cytokine production, and migration into the lung tissue and airways occur via alphabeta T-cells. Also causes the intoxication staphylococcal food poisoning syndrome. The illness is characterized by high fever, hypotension, diarrhea, shock, and in some cases death. The sequence is that of Enterotoxin type A (entA) from Staphylococcus aureus.